The following is a 70-amino-acid chain: Cuticle protein 16 isoform b (70 aa).

The protein is Cuticle protein 16 isoform b of Limulus polyphemus (Atlantic horseshoe crab).